A 731-amino-acid chain; its full sequence is Replication restart protein PriA (731 aa).

The tract at residues 1–98 is 3'BD; that stretch reads MSVAHVALPV…HPIGDVLFHA (98 aa). A WH region spans residues 115 to 177; sequence WYWFATEQGQ…RGKGLAELAC (63 aa). Residues 200 to 375 are helicase lobe 1; the sequence is TEQATAVGAI…VRQGKYRQLT (176 aa). In terms of domain architecture, Helicase ATP-binding spans 210–376; it reads HSAADRFSAW…RQGKYRQLTL (167 aa). 223 to 230 is a binding site for ATP; the sequence is GITGSGKT. Residues Gly-226, Gly-228, Lys-229, Thr-230, Glu-231, and Arg-263 each coordinate ADP. The DEAH box motif lies at 319–322; sequence DEEH. The Aromatic-rich loop (ARL) motif lies at 326–340; sequence YKQQEGWRYHARDLA. Residues 387–430 are helicase lobe 2, N-terminus; it reads QQHVLDLKGQPLQAGLSPALISRMRQHLQADNQVILFLNRRGFA. The segment at 431 to 485 is CRR; that stretch reads PALLCHDCGWIAECPRCDSYYTLHQAQHHLRCHHCDSQRPIPRQCPSCGSTHLVP. Residues Cys-435, Cys-438, Cys-444, Cys-447, Cys-462, Cys-465, Cys-475, and Cys-478 each contribute to the Zn(2+) site. Residues 470 to 637 enclose the Helicase C-terminal domain; that stretch reads PIPRQCPSCG…QLPPWTSHVL (168 aa). A helicase lobe 2, C-terminus region spans residues 486 to 626; it reads VGIGTEQLEQ…AEQALAERQT (141 aa). Lys-543 contacts ADP. The segment at 633–731 is CTD; it reads TSHVLIRAED…WVLDVDPIEG (99 aa).

The protein belongs to the helicase family. PriA subfamily. Binds SSB. Component of the replication restart primosome. Zn(2+) serves as cofactor.

It carries out the reaction Couples ATP hydrolysis with the unwinding of duplex DNA by translocating in the 3'-5' direction.. The catalysed reaction is ATP + H2O = ADP + phosphate + H(+). Its activity is regulated as follows. ATPase activity is stimulated by single-stranded binding protein (SSB). Functionally, initiates the restart of stalled replication forks, which reloads the replicative helicase on sites other than the origin of replication. Recognizes and binds to abandoned replication forks and remodels them to uncover a helicase loading site. Promotes assembly of the primosome at these replication forks. Its function is as follows. Recognizes abandoned replication forks and remodels SSB on ssDNA to uncover a loading site for DnaB. Binds replication fork DNA, has DNA-dependent ATPase activity in the presence of replication fork DNA, restores normal cell growth and SOS induction to E.coli mutant pirA304. This is Replication restart protein PriA from Klebsiella pneumoniae subsp. pneumoniae (strain ATCC 700721 / MGH 78578).